A 325-amino-acid polypeptide reads, in one-letter code: Tryptophan--tRNA ligase (325 aa).

ATP is bound by residues 9–11 (QPS) and 17–18 (GN). The short motif at 10 to 18 (PSGILHIGN) is the 'HIGH' region element. Asp-132 contributes to the L-tryptophan binding site. ATP is bound by residues 144–146 (GKD), Val-184, and 191–195 (KMSKS). A 'KMSKS' region motif is present at residues 191–195 (KMSKS).

Belongs to the class-I aminoacyl-tRNA synthetase family. In terms of assembly, homodimer.

It is found in the cytoplasm. The catalysed reaction is tRNA(Trp) + L-tryptophan + ATP = L-tryptophyl-tRNA(Trp) + AMP + diphosphate + H(+). In terms of biological role, catalyzes the attachment of tryptophan to tRNA(Trp). The protein is Tryptophan--tRNA ligase of Fusobacterium nucleatum subsp. nucleatum (strain ATCC 25586 / DSM 15643 / BCRC 10681 / CIP 101130 / JCM 8532 / KCTC 2640 / LMG 13131 / VPI 4355).